Consider the following 691-residue polypeptide: DNA-directed RNA polymerase subunit beta' (691 aa).

The Zn(2+) site is built by C69, C71, C87, and C90. Mg(2+)-binding residues include D489, D491, and D493.

Belongs to the RNA polymerase beta' chain family. RpoC1 subfamily. As to quaternary structure, in plastids the minimal PEP RNA polymerase catalytic core is composed of four subunits: alpha, beta, beta', and beta''. When a (nuclear-encoded) sigma factor is associated with the core the holoenzyme is formed, which can initiate transcription. It depends on Mg(2+) as a cofactor. The cofactor is Zn(2+).

It is found in the plastid. The protein localises to the chloroplast. It catalyses the reaction RNA(n) + a ribonucleoside 5'-triphosphate = RNA(n+1) + diphosphate. In terms of biological role, DNA-dependent RNA polymerase catalyzes the transcription of DNA into RNA using the four ribonucleoside triphosphates as substrates. In Jasminum nudiflorum (Winter jasmine), this protein is DNA-directed RNA polymerase subunit beta'.